The following is a 235-amino-acid chain: MSTEQDIKTEEQIPLTYAAVAAPTVQTEGEAVVAPEEPKPKKNWFTFGKKKAAPTDETNIEEGGAPGDEPVKEKKEKKCWWSRCQKGEGEQKEENIAIGVDLVNRDANSMNNHVQLNFEDIFGEADSQHSWDCVWRLNHTVFTAVRLFIYRLVSLLALPFTIIFAIFFGLLASINVFIIVPLGKLLSIPGTLLAKLWNWLIHAIFDPIASAVGLIFSNFNIRKYGINQETTAPCV.

The Cytoplasmic segment spans residues 1–161 (MSTEQDIKTE…LVSLLALPFT (161 aa)). Positions 29-72 (GEAVVAPEEPKPKKNWFTFGKKKAAPTDETNIEEGGAPGDEPVK) are disordered. The helical intramembrane region spans 162 to 182 (IIFAIFFGLLASINVFIIVPL). Over 183 to 235 (GKLLSIPGTLLAKLWNWLIHAIFDPIASAVGLIFSNFNIRKYGINQETTAPCV) the chain is Cytoplasmic. A lipid anchor (S-palmitoyl cysteine) is attached at Cys234.

It belongs to the caveolin family. As to quaternary structure, homooligomer containing 14-16 monomers per oligomer.

It localises to the golgi apparatus membrane. Its subcellular location is the cell membrane. It is found in the membrane. The protein resides in the caveola. In terms of biological role, may act as a scaffolding protein within caveolar membranes. Interacts directly with G-protein alpha subunits and can functionally regulate their activity. The polypeptide is Caveolin-1 (cav-1) (Caenorhabditis elegans).